We begin with the raw amino-acid sequence, 213 residues long: Adenylate kinase (213 aa).

14–19 (GSGKGT) lines the ATP pocket. The tract at residues 34-63 (SSGELFRSAIDSASPLGIKAAEYINQGLLV) is NMP. AMP-binding positions include Ser-35, Arg-40, 61-63 (LLV), 89-92 (GFPR), and Gln-96. Positions 129–162 (SRFICPSCKHVYNQNQGLSECPTCQMKLVRRSDD) are LID. Arg-130 contacts ATP. Zn(2+)-binding residues include Cys-133 and Cys-136. An ATP-binding site is contributed by 139–140 (VY). Residues Cys-149 and Cys-152 each contribute to the Zn(2+) site. Arg-159 and Arg-170 together coordinate AMP. Residue Ala-198 participates in ATP binding.

The protein belongs to the adenylate kinase family. As to quaternary structure, monomer.

Its subcellular location is the cytoplasm. The enzyme catalyses AMP + ATP = 2 ADP. It participates in purine metabolism; AMP biosynthesis via salvage pathway; AMP from ADP: step 1/1. In terms of biological role, catalyzes the reversible transfer of the terminal phosphate group between ATP and AMP. Plays an important role in cellular energy homeostasis and in adenine nucleotide metabolism. This Chlamydia abortus (strain DSM 27085 / S26/3) (Chlamydophila abortus) protein is Adenylate kinase.